Reading from the N-terminus, the 106-residue chain is Cytochrome c (106 aa).

The heme c site is built by Cys-17, Cys-20, and His-21. Lys-75 bears the N6,N6,N6-trimethyllysine mark. Met-83 is a binding site for heme c.

The protein belongs to the cytochrome c family. Post-translationally, binds 1 heme c group covalently per subunit.

It localises to the mitochondrion intermembrane space. Functionally, electron carrier protein. The oxidized form of the cytochrome c heme group can accept an electron from the heme group of the cytochrome c1 subunit of cytochrome reductase. Cytochrome c then transfers this electron to the cytochrome oxidase complex, the final protein carrier in the mitochondrial electron-transport chain. This chain is Cytochrome c (CYC1), found in Gibberella zeae (strain ATCC MYA-4620 / CBS 123657 / FGSC 9075 / NRRL 31084 / PH-1) (Wheat head blight fungus).